The chain runs to 312 residues: Olfactory receptor 6C1 (312 aa).

Residues M1–V23 are Extracellular-facing. N-linked (GlcNAc...) asparagine glycosylation occurs at N3. The helical transmembrane segment at V24 to I44 threads the bilayer. The Cytoplasmic portion of the chain corresponds to T45–H52. Residues L53–T73 form a helical membrane-spanning segment. The Extracellular segment spans residues V74 to V97. A disulfide bond links C95 and C187. The chain crosses the membrane as a helical span at residues Q98–Y118. Residues D119 to R137 lie on the Cytoplasmic side of the membrane. Residues V138–L158 traverse the membrane as a helical segment. Over M159 to V195 the chain is Extracellular. Residues M196–S215 form a helical membrane-spanning segment. Over Y216–A235 the chain is Cytoplasmic. The helical transmembrane segment at F236 to M256 threads the bilayer. The Extracellular segment spans residues Y257–S269. A helical membrane pass occupies residues K270–L290. Topologically, residues R291 to T312 are cytoplasmic.

It belongs to the G-protein coupled receptor 1 family.

It localises to the cell membrane. Functionally, odorant receptor. The chain is Olfactory receptor 6C1 (OR6C1) from Homo sapiens (Human).